The following is a 632-amino-acid chain: Serine/threonine-protein kinase plk-2 (632 aa).

The disordered stretch occupies residues 1-26 (MQRVQPSAARVKSQKKEKAPPDVPDV). The 252-residue stretch at 36-287 (YEKGKFLGKG…ARAVCRDHFF (252 aa)) folds into the Protein kinase domain. ATP is bound by residues 42-50 (LGKGGFAHC) and lysine 65. Aspartate 159 acts as the Proton acceptor in catalysis. Residues 313-334 (AEENVSPSGTIDQRGPHQAGRS) are disordered. 2 POLO box domains span residues 405 to 484 (WISK…YMND) and 506 to 588 (TLRV…RLVE).

The protein belongs to the protein kinase superfamily. Ser/Thr protein kinase family. CDC5/Polo subfamily. Interacts (via POLO box domain) with mex-5 and mex-6. Interacts (via POLO box domain) with him-8 (via N-terminus); the interaction mediates plk-2 recruitment to the pairing region of X chromosomes during meiosis. Interacts with sun-1. May interact with nicotinic acetylcholine receptor. Mg(2+) serves as cofactor. As to expression, expressed in oocytes.

The protein resides in the nucleus. Its subcellular location is the cytoplasm. It localises to the cytoskeleton. It is found in the microtubule organizing center. The protein localises to the centrosome. The protein resides in the chromosome. Its subcellular location is the centromere. It localises to the kinetochore. The enzyme catalyses L-seryl-[protein] + ATP = O-phospho-L-seryl-[protein] + ADP + H(+). It catalyses the reaction L-threonyl-[protein] + ATP = O-phospho-L-threonyl-[protein] + ADP + H(+). Functionally, serine/threonine-protein kinase which plays a role, during oogenesis, in chromosome pairing and synapsis, by facilitating the recruitment and attachment of meiotic chromosomes to the nuclear envelope during prophase. Promotes the localization of brc-1 to the short arm of homologous chromosomes during meiotic prophase I. Regulates the formation of sun-1 patches along the nuclear envelope. Promotes meiotic nuclei apoptosis in response to chromosomal asynapsis. Plays a redundant role with plk-1 in the establishment of cell polarity downstream of mex-5 and mex-6 during the first embryonic cell divisions. Plays a role in nicotinic acetylcholine receptor-mediated sensitivity to nicotine but not levamisole. Regulates motility. The protein is Serine/threonine-protein kinase plk-2 of Caenorhabditis elegans.